Reading from the N-terminus, the 124-residue chain is Alpha-amylase inhibitor 0.19 (124 aa).

Cystine bridges form between Cys6/Cys52, Cys20/Cys41, Cys28/Cys83, Cys42/Cys99, and Cys54/Cys115.

The protein belongs to the protease inhibitor I6 (cereal trypsin/alpha-amylase inhibitor) family. In terms of assembly, homodimer. Post-translationally, the disulfide bonds are essential for the inhibitor activity. Endosperm.

The protein localises to the secreted. In terms of biological role, alpha-amylase inhibitor. The sequence is that of Alpha-amylase inhibitor 0.19 from Triticum aestivum (Wheat).